A 469-amino-acid chain; its full sequence is ABHD16B (469 aa).

In terms of domain architecture, AB hydrolase-1 spans 174 to 298 (VICCEGNAGF…GLVVRTVREH (125 aa)). Catalysis depends on charge relay system residues Ser247, Asp322, and His418.

It belongs to the AB hydrolase superfamily. ABHD16 family.

It carries out the reaction a 1,2-diacyl-sn-glycero-3-phospho-L-serine + H2O = a 2-acyl-sn-glycero-3-phospho-L-serine + a fatty acid + H(+). It catalyses the reaction a 1-acylglycerol + H2O = glycerol + a fatty acid + H(+). The catalysed reaction is 1-(9Z-octadecenoyl)-glycerol + H2O = glycerol + (9Z)-octadecenoate + H(+). Hydrolyzes the sn-1 position of glycerophospholipids with high specificity towards phosphatidylserine (PS), PS-PLA1 enzyme. Also hydrolyzes the acyl chain of glycerolipids with a preference for the monoacylglycerol (MAG) 1-acylglycerol, MAG lipase. Plays a regulatory role in cellular lipid homeostasis by modulating genes involved in neutral lipid degradation and in phospholipid synthesis and composition. The sequence is that of ABHD16B from Homo sapiens (Human).